The chain runs to 120 residues: Large ribosomal subunit protein bL19 (120 aa).

It belongs to the bacterial ribosomal protein bL19 family.

Functionally, this protein is located at the 30S-50S ribosomal subunit interface and may play a role in the structure and function of the aminoacyl-tRNA binding site. This Cyanothece sp. (strain PCC 7425 / ATCC 29141) protein is Large ribosomal subunit protein bL19.